A 396-amino-acid polypeptide reads, in one-letter code: Bifunctional enzyme Fae/Hps (396 aa).

The formaldehyde-activating enzyme stretch occupies residues 1–161; sequence MMLIGEALIG…HEKDRAAHAV (161 aa). The active-site Proton donor is the His-17. Asp-19, Leu-48, Lys-66, Thr-68, and Gln-83 together coordinate substrate. Residues 162-396 form a 3-hexulose-6-phosphate synthase region; that stretch reads MGFKISKLWD…IDQFRIMTDF (235 aa).

This sequence in the N-terminal section; belongs to the formaldehyde-activating enzyme family. In the C-terminal section; belongs to the HPS/KGPDC family. HPS subfamily.

The enzyme catalyses 5,6,7,8-tetrahydromethanopterin + formaldehyde = 5,10-methylenetetrahydromethanopterin + H2O. It carries out the reaction D-ribulose 5-phosphate + formaldehyde = D-arabino-hex-3-ulose 6-phosphate. The protein operates within carbohydrate biosynthesis; D-ribose 5-phosphate biosynthesis. In terms of biological role, catalyzes the condensation of formaldehyde with tetrahydromethanopterin (H(4)MPT) to 5,10-methylenetetrahydromethanopterin. Functionally, catalyzes the reversible formation of ribulose-5-phosphate and formaldehyde from 3-hexulose-6-phosphate. In Methanococcoides burtonii (strain DSM 6242 / NBRC 107633 / OCM 468 / ACE-M), this protein is Bifunctional enzyme Fae/Hps.